Here is a 178-residue protein sequence, read N- to C-terminus: Probable host range protein 2 (178 aa).

The protein belongs to the poxviridae C7 protein family.

In terms of biological role, plays a role for multiplication of the virus in different cell types. The polypeptide is Probable host range protein 2 (Yaba-like disease virus (YLDV)).